A 152-amino-acid chain; its full sequence is Peptide deformylase (152 aa).

Fe cation is bound by residues Cys88 and His130. Glu131 is a catalytic residue. A Fe cation-binding site is contributed by His134.

It belongs to the polypeptide deformylase family. It depends on Fe(2+) as a cofactor.

It carries out the reaction N-terminal N-formyl-L-methionyl-[peptide] + H2O = N-terminal L-methionyl-[peptide] + formate. Removes the formyl group from the N-terminal Met of newly synthesized proteins. Requires at least a dipeptide for an efficient rate of reaction. N-terminal L-methionine is a prerequisite for activity but the enzyme has broad specificity at other positions. The chain is Peptide deformylase from Syntrophomonas wolfei subsp. wolfei (strain DSM 2245B / Goettingen).